Reading from the N-terminus, the 303-residue chain is MDKGQTLSQTSGRVTFKELKAIIKMGLVQGNLIPAFAGSWLAIVLANHSFLSSIPQILLMLIGSTLIMGGACALNNYYDQDIDRIMPSKQARPTVNDRISNKNLLILSFGMMVIGEIALFILNIPSGVIGLMGIIGYVSFYSIWSKRHTTWNTVIGAFPGAVPPVIGWTAIEGQLSMTAIALFLVIFCWQPIHFYALAIKRQDEYSAANIPMLPSVKGFNRTRIGMFVWLILLLPLPFLLSDLGPVFIGLATLLNLGWIYLGLTSYKKKSDHMKWATLMFVYSLNYLVLFFALVVIISLINMI.

Transmembrane regions (helical) follow at residues Met-25 to Leu-45, Ile-54 to Leu-74, Leu-104 to Ile-124, Pro-125 to Ser-145, Trp-151 to Ile-171, Ala-179 to Ile-199, Val-228 to Ile-248, and Phe-280 to Ile-300.

Belongs to the UbiA prenyltransferase family. Protoheme IX farnesyltransferase subfamily. In terms of assembly, interacts with CtaA.

The protein resides in the cell membrane. It catalyses the reaction heme b + (2E,6E)-farnesyl diphosphate + H2O = Fe(II)-heme o + diphosphate. It functions in the pathway porphyrin-containing compound metabolism; heme O biosynthesis; heme O from protoheme: step 1/1. In terms of biological role, converts heme B (protoheme IX) to heme O by substitution of the vinyl group on carbon 2 of heme B porphyrin ring with a hydroxyethyl farnesyl side group. This Staphylococcus carnosus (strain TM300) protein is Protoheme IX farnesyltransferase.